The primary structure comprises 249 residues: Pyridoxine 5'-phosphate synthase (249 aa).

Asn10 is a binding site for 3-amino-2-oxopropyl phosphate. Residue Asp12–His13 participates in 1-deoxy-D-xylulose 5-phosphate binding. Arg21 serves as a coordination point for 3-amino-2-oxopropyl phosphate. Catalysis depends on His46, which acts as the Proton acceptor. Residues Arg48 and His53 each contribute to the 1-deoxy-D-xylulose 5-phosphate site. The active-site Proton acceptor is the Glu73. Residue Thr103 participates in 1-deoxy-D-xylulose 5-phosphate binding. His194 functions as the Proton donor in the catalytic mechanism. 3-amino-2-oxopropyl phosphate contacts are provided by residues Gly195 and Gly216–His217.

This sequence belongs to the PNP synthase family. Homooctamer; tetramer of dimers.

The protein localises to the cytoplasm. The enzyme catalyses 3-amino-2-oxopropyl phosphate + 1-deoxy-D-xylulose 5-phosphate = pyridoxine 5'-phosphate + phosphate + 2 H2O + H(+). It functions in the pathway cofactor biosynthesis; pyridoxine 5'-phosphate biosynthesis; pyridoxine 5'-phosphate from D-erythrose 4-phosphate: step 5/5. Catalyzes the complicated ring closure reaction between the two acyclic compounds 1-deoxy-D-xylulose-5-phosphate (DXP) and 3-amino-2-oxopropyl phosphate (1-amino-acetone-3-phosphate or AAP) to form pyridoxine 5'-phosphate (PNP) and inorganic phosphate. The sequence is that of Pyridoxine 5'-phosphate synthase from Rhodospirillum rubrum (strain ATCC 11170 / ATH 1.1.1 / DSM 467 / LMG 4362 / NCIMB 8255 / S1).